The chain runs to 273 residues: Rhamnulose-1-phosphate aldolase (273 aa).

Glu117 is a catalytic residue. His140, His142, and His211 together coordinate Zn(2+).

The protein belongs to the aldolase class II family. RhaD subfamily. Zn(2+) serves as cofactor.

The protein localises to the cytoplasm. It catalyses the reaction L-rhamnulose 1-phosphate = (S)-lactaldehyde + dihydroxyacetone phosphate. The protein operates within carbohydrate degradation; L-rhamnose degradation; glycerone phosphate from L-rhamnose: step 3/3. Catalyzes the reversible cleavage of L-rhamnulose-1-phosphate to dihydroxyacetone phosphate (DHAP) and L-lactaldehyde. The sequence is that of Rhamnulose-1-phosphate aldolase from Listeria monocytogenes serotype 4b (strain F2365).